The primary structure comprises 381 residues: Glycerate 2-kinase (381 aa).

It belongs to the glycerate kinase type-1 family.

It carries out the reaction (R)-glycerate + ATP = (2R)-2-phosphoglycerate + ADP + H(+). Functionally, catalyzes the transfer of the phosphate group from adenosine triphosphate (ATP) to (R)-glycerate to form (2R)-2-phosphoglycerate, an enzymatic step in (L)-glucarate/galactarate catabolic pathway. This is Glycerate 2-kinase (garK) from Escherichia coli (strain K12).